Reading from the N-terminus, the 250-residue chain is N-acyl homoserine lactonase (250 aa).

Zn(2+) contacts are provided by His-104, His-106, Asp-108, His-109, His-169, Asp-191, and His-235.

This sequence belongs to the metallo-beta-lactamase superfamily. Monomer. The cofactor is Zn(2+).

It carries out the reaction an N-acyl-L-homoserine lactone + H2O = an N-acyl-L-homoserine + H(+). Catalyzes hydrolysis of N-hexanoyl-(S)-homoserine lactone, but not the R-enantiomer. Hydrolyzes short- and long-chain N-acyl homoserine lactones with or without 3-oxo substitution at C3, has maximum activity on C10-AHL. This chain is N-acyl homoserine lactonase, found in Bacillus thuringiensis subsp. indiana.